A 237-amino-acid chain; its full sequence is MAEYLASIFGTEKDKVNCSFYFKIGACRHGDRCSRLHNKPTFSQTIALLNIYRNPQNSSQSADGLRCAVSDVEMQEHYDEFFEEVFTEMEEKYGEVEEMNVCDNLGDHLVGNVYVKFRREEDAEKAVIDLNNRWFNGQPIHAELSPVTDFREACCRQYEMGECTRGGFCNFMHLKPISRELRRELYGRRRKKHRSRSRSRERRSRSRDRGRGGGGGGGGGRERDRRRSRDRERSGRF.

An N-acetylalanine modification is found at Ala-2. Residues 12 to 40 (EKDKVNCSFYFKIGACRHGDRCSRLHNKP) form a C3H1-type 1 zinc finger. N6-methyllysine is present on Lys-39. 2 positions are modified to phosphoserine: Ser-61 and Ser-145. The RRM domain maps to 65–147 (LRCAVSDVEM…QPIHAELSPV (83 aa)). The segment at 149–176 (DFREACCRQYEMGECTRGGFCNFMHLKP) adopts a C3H1-type 2 zinc-finger fold. Omega-N-methylarginine is present on Arg-165. The interval 185 to 237 (LYGRRRKKHRSRSRSRERRSRSRDRGRGGGGGGGGGRERDRRRSRDRERSGRF) is disordered. The span at 188–208 (RRRKKHRSRSRSRERRSRSRD) shows a compositional bias: basic residues. A compositionally biased stretch (basic and acidic residues) spans 220–237 (GRERDRRRSRDRERSGRF).

This sequence belongs to the splicing factor SR family. In terms of assembly, identified in the spliceosome C complex. Heterodimer with U2AF2. Interacts (via RS domain) with PHF5A (via N-terminus). Interacts with ZRANB2. Interacts with SDE2. Interacts with SF3B1.

Its subcellular location is the nucleus. The protein resides in the nucleus speckle. Its function is as follows. Plays a critical role in both constitutive and enhancer-dependent splicing by mediating protein-protein interactions and protein-RNA interactions required for accurate 3'-splice site selection. Recruits U2 snRNP to the branch point. Directly mediates interactions between U2AF2 and proteins bound to the enhancers and thus may function as a bridge between U2AF2 and the enhancer complex to recruit it to the adjacent intron. This Bos taurus (Bovine) protein is Splicing factor U2AF 35 kDa subunit (U2AF1).